Here is a 582-residue protein sequence, read N- to C-terminus: Pescadillo homolog (582 aa).

A coiled-coil region spans residues 277–329 (LSALSASLARVVATVEEEENQLDNFPTEEEDQENMQAREKEQKEQEAQKRLFE). The span at 294 to 309 (EENQLDNFPTEEEDQE) shows a compositional bias: acidic residues. The disordered stretch occupies residues 294–317 (EENQLDNFPTEEEDQENMQAREKE). One can recognise a BRCT domain in the interval 323–416 (AQKRLFEGLK…MRLPVEDYFL (94 aa)). A compositionally biased stretch (basic and acidic residues) spans 445-454 (ALQRGEKPVQ). Disordered stretches follow at residues 445–511 (ALQR…ETGS) and 554–582 (REVN…AKKQ). Residues 455–477 (EEDEEEEDEDEEEDDDVDDEEFT) show a composition bias toward acidic residues. Residues 478–490 (EEKNLKKMEDTRA) are compositionally biased toward basic and acidic residues. The stretch at 517–582 (RLEQEEKAEE…QKKQKKAKKQ (66 aa)) forms a coiled coil. Basic residues predominate over residues 572–582 (AQKKQKKAKKQ).

The protein belongs to the pescadillo family. As to quaternary structure, component of the PeBoW complex, composed of bop1, pes1 and wdr12. The complex is held together by bop1, which interacts with pes1 via its N-terminal domain and with wdr12 via a high-affinity interaction between the seven-bladed beta-propeller domains of the 2 proteins. The PeBoW complex associates with the 66S pre-ribosome.

It localises to the nucleus. The protein localises to the nucleolus. It is found in the nucleoplasm. Its function is as follows. Component of the PeBoW complex, which is required for maturation of 28S and 5.8S ribosomal RNAs and formation of the 60S ribosome. This is Pescadillo homolog (pes1) from Salmo salar (Atlantic salmon).